The sequence spans 167 residues: MAFSISSTMIFLLSLALFSTLVSADNHLLPGERLNPGNFLKQDRYMLIMQEDCNLVLYNLNKPEWATKTANQGSRCFVTLQSDGNFVIYDEHEQEGRNEAIWASKTDGENGNYVIILQKDGNLVLYSKPIFATGTNRFGSTAVVVAKRNRKAHFGVEQNIIEVTTNL.

A signal peptide spans 1–24 (MAFSISSTMIFLLSLALFSTLVSA). Residues 25 to 138 (DNHLLPGERL…PIFATGTNRF (114 aa)) form the Bulb-type lectin domain. A disulfide bond links C53 and C76.

Homotetramer. In terms of tissue distribution, expressed in the pseudobulb, with highest levels of expression in the non-swollen internode (at protein level).

The protein localises to the secreted. In terms of biological role, mannose-specific lectin. Shows agglutinating activity towards chicken erythrocytes. Has antifungal activity against A.alternata and Collectotrichum species. The protein is Mannose-specific lectin of Dendrobium findlayanum (Findlay's orchid).